The sequence spans 266 residues: Short-chain dehydrogenase/reductase atnB (266 aa).

NADP(+) contacts are provided by Ile13, Asp57, and Asn85. Active-site proton donor residues include Ser147 and Tyr166. NADP(+) contacts are provided by Tyr166, Lys170, Val199, and Thr201. Residue Lys170 is the Lowers pKa of active site Tyr of the active site.

This sequence belongs to the short-chain dehydrogenases/reductases (SDR) family.

The protein operates within secondary metabolite biosynthesis; terpenoid biosynthesis. Its function is as follows. Short-chain dehydrogenase/reductase; part of the gene cluster that mediates the biosynthesis of the meroterpenoids arthripenoids. The pathway begins with the HR-PKS atnH that catalyzes two chain-extension steps to form a reduced triketide, which then primes the SAT domain in the NR-PKS atnG to initiate three more cycles of extension to give a linear hexaketide corresponding to the polyketide part of arthripenoids. The FAD-dependent monooxygenase atnJ then performs an oxidative decarboxylation at C11 of the atnH/atnG product, via an electrophilic aromatic hydroxylation with concomitant ipso-decarboxylation. The membrane-bound polyprenyl transferase atnF then introduces a farnesyl group before the FAD-dependent monooxygenase atnK functions as the first epoxidase on terminal C12'-C13' olefin, followed by a second epoxidation on C7'-C8' catalyzed by atnA. The terpene cyclase/mutase atnI then initiates the sequential tricyclic ring formation through protonation of the terminal epoxide and catalyzes the regioselective and stereoselective 6/6/6-tricyclic ring formation. The cytochrome P450 monooxygenase atnM is responsible for hydroxylating both C1' and C10'. The next steps may involve ketoreduction and acetyl transfer by the ketoreductase atnB and the acetyltransferase atnC, and lead to the production of arthripenoid B, the final biosynthetic product of the atn cluster. The hydroquinone moiety in arthripenoid B is prone to undergo spontaneous oxidation to afford a benzoquinone compound, a key intermediate for generating structure diversity. For instance, addition of a cysteine followed by ring contraction gives arthripenoid A, tautomerization gives the main product arthripenoid C, addition of a molecular of water or amine affords arthripenoid D or E, respectively, and loss of one water forms arthripenoid F. This chain is Short-chain dehydrogenase/reductase atnB, found in Arthrinium sp.